We begin with the raw amino-acid sequence, 493 residues long: Ketol-acid reductoisomerase (NADP(+)) (493 aa).

The region spanning 14 to 208 (LDQLGRCRFM…GGDRAGVLES (195 aa)) is the KARI N-terminal Rossmann domain. NADP(+) contacts are provided by residues 45 to 48 (CGAQ), Arg68, Arg76, Ser78, and 108 to 110 (DKQ). His132 is an active-site residue. Residue Gly158 participates in NADP(+) binding. 2 consecutive KARI C-terminal knotted domains span residues 209–345 (SFVA…APKA) and 346–486 (DGIK…MTDM). The Mg(2+) site is built by Asp217, Glu221, Glu390, and Glu394. Ser415 is a binding site for substrate.

Belongs to the ketol-acid reductoisomerase family. The cofactor is Mg(2+).

It carries out the reaction (2R)-2,3-dihydroxy-3-methylbutanoate + NADP(+) = (2S)-2-acetolactate + NADPH + H(+). The enzyme catalyses (2R,3R)-2,3-dihydroxy-3-methylpentanoate + NADP(+) = (S)-2-ethyl-2-hydroxy-3-oxobutanoate + NADPH + H(+). Its pathway is amino-acid biosynthesis; L-isoleucine biosynthesis; L-isoleucine from 2-oxobutanoate: step 2/4. It participates in amino-acid biosynthesis; L-valine biosynthesis; L-valine from pyruvate: step 2/4. Involved in the biosynthesis of branched-chain amino acids (BCAA). Catalyzes an alkyl-migration followed by a ketol-acid reduction of (S)-2-acetolactate (S2AL) to yield (R)-2,3-dihydroxy-isovalerate. In the isomerase reaction, S2AL is rearranged via a Mg-dependent methyl migration to produce 3-hydroxy-3-methyl-2-ketobutyrate (HMKB). In the reductase reaction, this 2-ketoacid undergoes a metal-dependent reduction by NADPH to yield (R)-2,3-dihydroxy-isovalerate. The sequence is that of Ketol-acid reductoisomerase (NADP(+)) from Actinobacillus succinogenes (strain ATCC 55618 / DSM 22257 / CCUG 43843 / 130Z).